Consider the following 279-residue polypeptide: 2-dehydro-3-deoxyphosphooctonate aldolase (279 aa).

This sequence belongs to the KdsA family.

Its subcellular location is the cytoplasm. The enzyme catalyses D-arabinose 5-phosphate + phosphoenolpyruvate + H2O = 3-deoxy-alpha-D-manno-2-octulosonate-8-phosphate + phosphate. It participates in carbohydrate biosynthesis; 3-deoxy-D-manno-octulosonate biosynthesis; 3-deoxy-D-manno-octulosonate from D-ribulose 5-phosphate: step 2/3. It functions in the pathway bacterial outer membrane biogenesis; lipopolysaccharide biosynthesis. The polypeptide is 2-dehydro-3-deoxyphosphooctonate aldolase (Methylobacillus flagellatus (strain ATCC 51484 / DSM 6875 / VKM B-1610 / KT)).